A 188-amino-acid polypeptide reads, in one-letter code: MTSISNVSKGSIIRFKGEPHIIESLIHRTPGNLRAFYQANMKNLKTGRNVEFRFSASESVDVIVTERKPYQYLYKDGTDFVMMDSGTFDQINVPEITLGTSSRFLKDGITVVIVFSDDGSILDVEMPTFVEVEVTETSPTTKDDRATSGTKPAIVETGAEVGVPMFIQTGSIIRVDTRTGEYIERVKK.

Belongs to the elongation factor P family.

Its subcellular location is the cytoplasm. It participates in protein biosynthesis; polypeptide chain elongation. Functionally, involved in peptide bond synthesis. Stimulates efficient translation and peptide-bond synthesis on native or reconstituted 70S ribosomes in vitro. Probably functions indirectly by altering the affinity of the ribosome for aminoacyl-tRNA, thus increasing their reactivity as acceptors for peptidyl transferase. In Chlorobium phaeobacteroides (strain DSM 266 / SMG 266 / 2430), this protein is Elongation factor P.